A 336-amino-acid polypeptide reads, in one-letter code: Holliday junction branch migration complex subunit RuvB (336 aa).

A large ATPase domain (RuvB-L) region spans residues 4–184 (ADRLISAGTT…FGIVQRLEFY (181 aa)). Residues isoleucine 23, arginine 24, glycine 65, lysine 68, threonine 69, threonine 70, 131-133 (EDY), arginine 174, tyrosine 184, and arginine 221 contribute to the ATP site. Threonine 69 is a Mg(2+) binding site. The interval 185–255 (QVPDLQYIVS…IAAQALDMLN (71 aa)) is small ATPAse domain (RuvB-S). The interval 258 to 336 (AEGFDYMDRK…HFGITPPEMP (79 aa)) is head domain (RuvB-H). DNA contacts are provided by arginine 294, arginine 313, and arginine 318.

The protein belongs to the RuvB family. In terms of assembly, homohexamer. Forms an RuvA(8)-RuvB(12)-Holliday junction (HJ) complex. HJ DNA is sandwiched between 2 RuvA tetramers; dsDNA enters through RuvA and exits via RuvB. An RuvB hexamer assembles on each DNA strand where it exits the tetramer. Each RuvB hexamer is contacted by two RuvA subunits (via domain III) on 2 adjacent RuvB subunits; this complex drives branch migration. In the full resolvosome a probable DNA-RuvA(4)-RuvB(12)-RuvC(2) complex forms which resolves the HJ.

Its subcellular location is the cytoplasm. The catalysed reaction is ATP + H2O = ADP + phosphate + H(+). In terms of biological role, the RuvA-RuvB-RuvC complex processes Holliday junction (HJ) DNA during genetic recombination and DNA repair, while the RuvA-RuvB complex plays an important role in the rescue of blocked DNA replication forks via replication fork reversal (RFR). RuvA specifically binds to HJ cruciform DNA, conferring on it an open structure. The RuvB hexamer acts as an ATP-dependent pump, pulling dsDNA into and through the RuvAB complex. RuvB forms 2 homohexamers on either side of HJ DNA bound by 1 or 2 RuvA tetramers; 4 subunits per hexamer contact DNA at a time. Coordinated motions by a converter formed by DNA-disengaged RuvB subunits stimulates ATP hydrolysis and nucleotide exchange. Immobilization of the converter enables RuvB to convert the ATP-contained energy into a lever motion, pulling 2 nucleotides of DNA out of the RuvA tetramer per ATP hydrolyzed, thus driving DNA branch migration. The RuvB motors rotate together with the DNA substrate, which together with the progressing nucleotide cycle form the mechanistic basis for DNA recombination by continuous HJ branch migration. Branch migration allows RuvC to scan DNA until it finds its consensus sequence, where it cleaves and resolves cruciform DNA. The chain is Holliday junction branch migration complex subunit RuvB from Escherichia coli O17:K52:H18 (strain UMN026 / ExPEC).